Consider the following 1732-residue polypeptide: Transient receptor potential cation channel subfamily M member 3 (1732 aa).

Topologically, residues Met-1–Pro-894 are cytoplasmic. Calmodulin-binding regions lie at residues Trp-41 to Trp-64, Asn-192 to Gly-215, Thr-300 to Asn-323, Arg-601 to Gly-624, and Arg-793 to Lys-816. The tract at residues Pro-617–Met-625 is required for the inhibitory action of G-beta/gamma-subunits of heterotrimeric G-proteins. Ser-796 is a binding site for 1,2-dioctanoyl-sn-glycero-3-phospho-(1D-myo-inositol-4,5-bisphosphate). The segment at Glu-829 to Asp-851 is disordered. Positions His-831–Lys-847 are enriched in basic and acidic residues. The chain crosses the membrane as a helical span at residues Ile-895–Val-918. Residues Lys-919 to Ser-925 are Extracellular-facing. The helical transmembrane segment at Thr-926–Met-948 threads the bilayer. The Cytoplasmic segment spans residues Ser-949–Glu-964. A helical transmembrane segment spans residues Tyr-965 to Leu-985. Residues Gln-986–Pro-989 lie on the Extracellular side of the membrane. Residues Phe-990–Phe-1013 form a helical membrane-spanning segment. The Cytoplasmic segment spans residues Gly-1014 to Lys-1028. 1,2-dioctanoyl-sn-glycero-3-phospho-(1D-myo-inositol-4,5-bisphosphate) is bound by residues Lys-1017 and Tyr-1018. The chain crosses the membrane as a helical span at residues Met-1029–Phe-1056. Topologically, residues Pro-1057–Pro-1073 are extracellular. Residues Tyr-1074–Thr-1101 constitute an intramembrane region (pore-forming). The Extracellular portion of the chain corresponds to Ile-1102–Ala-1111. Residues Trp-1112 to Phe-1137 traverse the membrane as a helical segment. Over Asn-1138–Asn-1732 the chain is Cytoplasmic. The tract at residues Glu-1610–Asn-1732 is disordered. 2 stretches are compositionally biased toward polar residues: residues Pro-1635–Thr-1653 and Asn-1690–Ser-1701.

It belongs to the transient receptor (TC 1.A.4) family. LTrpC subfamily. TRPM3 sub-subfamily. As to quaternary structure, homotetramer. Interacts with TRPM1; the interaction results in the formation of a heteromultimeric cation channel complex that are functionally different from the homomeric channels.

The protein resides in the cell membrane. It catalyses the reaction Ca(2+)(in) = Ca(2+)(out). It carries out the reaction Mn(2+)(in) = Mn(2+)(out). The enzyme catalyses Zn(2+)(in) = Zn(2+)(out). The catalysed reaction is Mg(2+)(in) = Mg(2+)(out). It catalyses the reaction Na(+)(in) = Na(+)(out). With respect to regulation, activated by the neurosteroid pregnelonone sulfate (PregS). PregS activates the channel by shifting its current-voltage activation curve toward more negative membrane potentials and also potentiates temperature-induced activation. Activated by heat. Intracellular Ca(2+) inhibits TRPM3 probably via interaction with Ca(2+)/calmodulin. Intracellular Mg(2+) inhibits TRPM3 activity. Both intracellular and extracellular protons block TRPM3 through propable binding sites in the pore region. Positively regulated by phosphoinositide phosphoinositol 4,5-biphosphate (PI(4,5)P2). Strongly inhibited by activation of G(i)-coupled receptors via direct binding with G-beta/gamma-subunits of heterotrimeric G-proteins. Its activity is regulated as follows. Insensitive to pregnenolone sulfate (PregS) or heat. Not inhibited by G-beta/gamma-subunits of heterotrimeric G-proteins. Functionally, constitutively active, non-selective divalent cation-conducting channel that is permeable to Ca(2+), Mn(2+), and Mg(2+), with a high permeability for Ca(2+). However, can be enhanced by increasing temperature and by ligands, including the endogenous neurosteroid pregnenolone sulfate and sphingosine-1 and suppressed by intracellular Mg(2+). Implicated in a variety of cellular processes, including insulin/peptide secretion, vascular constriction and dilation, noxious heat sensing, inflammatory and spontaneous pain sensitivity. In neurons of the dorsal root ganglia, functions as thermosensitive channel for the detection of noxious heat and spontaneous pain. Suggested to function as an ionotropic steroid receptor in beta-cell, indeed pregnenolone sulfate leads to Ca(2+) influx and enhanced insulin secretion. Mediates Zn(2+) uptake into the lumen of pancreatic beta cell secretory granules, thereby regulating insulin secretion. Forms heteromultimeric ion channels with TRPM1 which are permeable for Ca(2+) and Zn(2+) ions. Exists as multiple splice variants which differ significantly in their biophysical properties. Displays strongly reduced permeability for divalent cations and high selectivity toward monovalent cations. In terms of biological role, no channel activity. The chain is Transient receptor potential cation channel subfamily M member 3 from Mus musculus (Mouse).